The primary structure comprises 223 residues: Ribosome maturation factor RimM (223 aa).

The span at 1–12 (MARRPGSSSRGP) shows a compositional bias: low complexity. 2 disordered regions span residues 1-44 (MARR…DPGL) and 204-223 (ADPPDDLFAPPGPKPADDPG). The PRC barrel domain occupies 136 to 210 (EDEFFLTDLI…KVVADPPDDL (75 aa)).

Belongs to the RimM family. As to quaternary structure, binds ribosomal protein uS19.

It is found in the cytoplasm. An accessory protein needed during the final step in the assembly of 30S ribosomal subunit, possibly for assembly of the head region. Essential for efficient processing of 16S rRNA. May be needed both before and after RbfA during the maturation of 16S rRNA. It has affinity for free ribosomal 30S subunits but not for 70S ribosomes. This is Ribosome maturation factor RimM from Methylorubrum extorquens (strain PA1) (Methylobacterium extorquens).